The sequence spans 337 residues: ATP-dependent 6-phosphofructokinase (337 aa).

Gly11 contacts ATP. ADP is bound at residue 21–25 (RAVVR). ATP-binding positions include 72 to 73 (RY) and 102 to 105 (GDGS). A Mg(2+)-binding site is contributed by Asp103. A substrate-binding site is contributed by 125–127 (TID). The active-site Proton acceptor is the Asp127. An ADP-binding site is contributed by Arg154. Substrate-binding positions include Arg162 and 169–171 (MGR). ADP-binding positions include 185–187 (GAD), Lys212, and 214–216 (KNH). Residues Glu223, Arg245, and 251 to 254 (HILR) each bind substrate.

Belongs to the phosphofructokinase type A (PFKA) family. ATP-dependent PFK group I subfamily. Prokaryotic clade 'B1' sub-subfamily. As to quaternary structure, homotetramer. The cofactor is Mg(2+).

The protein resides in the cytoplasm. The enzyme catalyses beta-D-fructose 6-phosphate + ATP = beta-D-fructose 1,6-bisphosphate + ADP + H(+). It participates in carbohydrate degradation; glycolysis; D-glyceraldehyde 3-phosphate and glycerone phosphate from D-glucose: step 3/4. With respect to regulation, allosterically activated by ADP and other diphosphonucleosides, and allosterically inhibited by phosphoenolpyruvate. In terms of biological role, catalyzes the phosphorylation of D-fructose 6-phosphate to fructose 1,6-bisphosphate by ATP, the first committing step of glycolysis. This is ATP-dependent 6-phosphofructokinase from Streptococcus pyogenes serotype M1.